The sequence spans 321 residues: Acetyl-coenzyme A carboxylase carboxyl transferase subunit alpha (321 aa).

One can recognise a CoA carboxyltransferase C-terminal domain in the interval 32–293 (DISEEIARLQ…KRVLQDQLKE (262 aa)).

Belongs to the AccA family. As to quaternary structure, acetyl-CoA carboxylase is a heterohexamer composed of biotin carboxyl carrier protein (AccB), biotin carboxylase (AccC) and two subunits each of ACCase subunit alpha (AccA) and ACCase subunit beta (AccD).

It is found in the cytoplasm. The enzyme catalyses N(6)-carboxybiotinyl-L-lysyl-[protein] + acetyl-CoA = N(6)-biotinyl-L-lysyl-[protein] + malonyl-CoA. Its pathway is lipid metabolism; malonyl-CoA biosynthesis; malonyl-CoA from acetyl-CoA: step 1/1. Functionally, component of the acetyl coenzyme A carboxylase (ACC) complex. First, biotin carboxylase catalyzes the carboxylation of biotin on its carrier protein (BCCP) and then the CO(2) group is transferred by the carboxyltransferase to acetyl-CoA to form malonyl-CoA. This is Acetyl-coenzyme A carboxylase carboxyl transferase subunit alpha from Chromobacterium violaceum (strain ATCC 12472 / DSM 30191 / JCM 1249 / CCUG 213 / NBRC 12614 / NCIMB 9131 / NCTC 9757 / MK).